The primary structure comprises 363 residues: Sorting nexin-21 (363 aa).

A compositionally biased stretch (basic residues) spans methionine 1–histidine 11. A disordered region spans residues methionine 1–glutamine 99. The segment covering alanine 12–glutamate 28 has biased composition (low complexity). The segment covering serine 46 to serine 56 has biased composition (polar residues). Acidic residues predominate over residues alanine 57–glycine 71. Residues glutamine 119–arginine 236 enclose the PX domain. A 1,2-diacyl-sn-glycero-3-phospho-(1D-myo-inositol-3-phosphate) contacts are provided by arginine 161, serine 163, lysine 188, and arginine 202.

Belongs to the sorting nexin family. Monomer.

The protein resides in the cytoplasmic vesicle membrane. Its subcellular location is the early endosome membrane. In terms of biological role, binds to membranes enriched in phosphatidylinositol 3-phosphate (PtdIns(P3)) and phosphatidylinositol 4,5-bisphosphate. May be involved in several stages of intracellular trafficking. The sequence is that of Sorting nexin-21 from Mus musculus (Mouse).